Consider the following 301-residue polypeptide: Pseudouridine-5'-phosphate glycosidase (301 aa).

Residue Glu-23 is the Proton donor of the active site. Lys-84 and Val-104 together coordinate substrate. Asp-136 contacts Mn(2+). Substrate is bound at residue 138 to 140 (SRD). Catalysis depends on Lys-157, which acts as the Nucleophile.

This sequence belongs to the pseudouridine-5'-phosphate glycosidase family. In terms of assembly, homotrimer. It depends on Mn(2+) as a cofactor.

The catalysed reaction is D-ribose 5-phosphate + uracil = psi-UMP + H2O. Catalyzes the reversible cleavage of pseudouridine 5'-phosphate (PsiMP) to ribose 5-phosphate and uracil. Functions biologically in the cleavage direction, as part of a pseudouridine degradation pathway. This Mycoplasmopsis agalactiae (strain NCTC 10123 / CIP 59.7 / PG2) (Mycoplasma agalactiae) protein is Pseudouridine-5'-phosphate glycosidase.